The chain runs to 62 residues: Teretoxin Tan1.1 (62 aa).

Positions 1–21 (MSCFPVLFVMMLLVSQSVWAF) are cleaved as a signal peptide. Positions 22-38 (PGPETRDGSVQDAESRR) are excised as a propeptide.

The protein belongs to the teretoxin A (TA) superfamily. Contains 2 disulfide bonds. Expressed by the venom duct.

Its subcellular location is the secreted. This chain is Teretoxin Tan1.1, found in Terebra anilis (Auger snail).